Consider the following 471-residue polypeptide: Eremophilane O-acetyltransferase prx11 (471 aa).

It belongs to the fumigaclavine B O-acetyltransferase family. Monomer.

It participates in sesquiterpene biosynthesis. Its function is as follows. O-acetyltransferase; part of the gene cluster that mediates the biosynthesis of PR-toxin, a bicyclic sesquiterpene belonging to the eremophilane class and acting as a mycotoxin. The first step of the pathway is catalyzed by the aristolochene synthase which performs the cyclization of trans,trans-farnesyl diphosphate (FPP) to the bicyclic sesquiterpene aristolochene. Following the formation of aristolochene, the non-oxygenated aristolochene is converted to the trioxygenated intermediate eremofortin B, via 7-epi-neopetasone. This conversion appears to involve three enzymes, a hydroxysterol oxidase-like enzyme, the quinone-oxidase prx3 that forms the quinone-type-structure in the bicyclic nucleus of aristolochene with the C8-oxo group and the C-3 hydroxyl group, and the P450 monooxygenase prx9 that introduces the epoxide at the double bond between carbons 1 and 2. No monoxy or dioxy-intermediates have been reported to be released to the broth, so these three early oxidative reactions may be coupled together. Eremofortin B is further oxidized by another P450 monooxygenase, that introduces a second epoxide between carbons 7 and 11 prior to acetylation to eremofortin A by the acetyltransferase prx11. The second epoxidation may be performed by a second P450 monooxygenase. After the acetylation step, eremofortin A is converted to eremofortin C and then to PR-toxin. First the conversion of eremofortin A to eremofortin C proceeds by oxidation of the side chain of the molecule at C-12 and is catalyzed by the short-chain oxidoreductase prx1. The cytochrome P450 monooxygenase prx8 also plays a role in this step. The primary alcohol formed at C-12 is finally oxidized by the short-chain alcohol dehydrogenase prx4 that forms PR-toxin. In Penicillium rubens (strain ATCC 28089 / DSM 1075 / NRRL 1951 / Wisconsin 54-1255) (Penicillium chrysogenum), this protein is Eremophilane O-acetyltransferase prx11.